We begin with the raw amino-acid sequence, 181 residues long: Adenine phosphoribosyltransferase (181 aa).

It belongs to the purine/pyrimidine phosphoribosyltransferase family. As to quaternary structure, homodimer.

The protein localises to the cytoplasm. It catalyses the reaction AMP + diphosphate = 5-phospho-alpha-D-ribose 1-diphosphate + adenine. Its pathway is purine metabolism; AMP biosynthesis via salvage pathway; AMP from adenine: step 1/1. In terms of biological role, catalyzes a salvage reaction resulting in the formation of AMP, that is energically less costly than de novo synthesis. The protein is Adenine phosphoribosyltransferase of Vibrio parahaemolyticus serotype O3:K6 (strain RIMD 2210633).